Reading from the N-terminus, the 360-residue chain is Peptide chain release factor 1 (360 aa).

Q235 is subject to N5-methylglutamine. Positions 284 to 295 are enriched in basic and acidic residues; it reads ERQEQAQADTRR. The tract at residues 284 to 309 is disordered; it reads ERQEQAQADTRRNLLGSGDRSDKIRT.

It belongs to the prokaryotic/mitochondrial release factor family. In terms of processing, methylated by PrmC. Methylation increases the termination efficiency of RF1.

The protein localises to the cytoplasm. Functionally, peptide chain release factor 1 directs the termination of translation in response to the peptide chain termination codons UAG and UAA. The sequence is that of Peptide chain release factor 1 (prfA) from Pasteurella multocida (strain Pm70).